The chain runs to 174 residues: uncharacterized protein (174 aa).

One can recognise an N-acetyltransferase domain in the interval 42–174 (SSNKNINLYE…GVKGMFWYPR (133 aa)).

The protein belongs to the acetyltransferase family. Ycf52 subfamily.

It is found in the plastid. The protein localises to the chloroplast. This is an uncharacterized protein from Pyropia yezoensis (Susabi-nori).